A 294-amino-acid polypeptide reads, in one-letter code: Tetraspanin-15 (294 aa).

Residues 1–23 are Cytoplasmic-facing; it reads MPRGDSEQVRYCARFSYLWLKFS. A helical transmembrane segment spans residues 24 to 44; the sequence is LIIYSTVFWLIGALVLSVGIY. The Extracellular segment spans residues 45–62; that stretch reads AEVERQKYKTLESAFLAP. Residues 63 to 83 form a helical membrane-spanning segment; sequence AIILILLGVVMFMVSFIGVLA. The Cytoplasmic segment spans residues 84–93; sequence SLRDNLYLLQ. Residues 94-114 form a helical membrane-spanning segment; the sequence is AFMYILGICLIMELIGGVVAL. The Extracellular segment spans residues 115 to 235; sequence TFRNQTIDFL…WFMDNYTIMA (121 aa). N-linked (GlcNAc...) asparagine glycosylation is present at Asn118. 4 disulfide bridges follow: Cys154-Cys219, Cys155-Cys185, Cys171-Cys179, and Cys186-Cys198. N-linked (GlcNAc...) asparagine glycans are attached at residues Asn189 and Asn230. The chain crosses the membrane as a helical span at residues 236–256; sequence GILLGILLPQFLGVLLTLLYI. Over 257 to 294 the chain is Cytoplasmic; it reads TRVEDIIMEHSVTDGLLGPGAKPSVEAAGTGCCLCYPN.

This sequence belongs to the tetraspanin (TM4SF) family. As to quaternary structure, interacts with ADAM10; the interaction influences ADAM10 substrate specificity, endocytosis and turnover. In terms of processing, palmitoylated.

Its subcellular location is the cell membrane. The protein resides in the late endosome membrane. Its function is as follows. Part of TspanC8 subgroup, composed of 6 members that interact with the transmembrane metalloprotease ADAM10. This interaction is required for ADAM10 exit from the endoplasmic reticulum and for enzymatic maturation and trafficking to the cell surface as well as substrate specificity. Different TspanC8/ADAM10 complexes have distinct substrates. Promotes ADAM10-mediated cleavage of CDH2. Negatively regulates ligand-induced Notch activity probably by regulating ADAM10 activity. The chain is Tetraspanin-15 from Homo sapiens (Human).